The chain runs to 162 residues: MALVEGNNGVSGGAVSFSEEQEALVLKSWAIMKKDSANIGLRFFLKIFEVAPSASQMFSFLRNSDVPLEKNPKLKTHAMSVFVMLRKAGKVTVRDTTLKRLGATHFKYGVGDAHFEVTRFALLETIKEAVPVDMWSPAMKSAWSEAYNQLVAAIKQEMKPAE.

Positions 16 to 159 (SFSEEQEALV…LVAAIKQEMK (144 aa)) constitute a Globin domain. Residues 49–53 (EVAPS) carry the Homodimerization motif. 6 residues coordinate heme b: Ser-59, Lys-73, His-77, Arg-100, Thr-104, and His-105. The short motif at 112 to 124 (DAHFEVTRFALLE) is the Homodimerization element.

Belongs to the plant globin family. Homodimer. Heme b serves as cofactor. As to expression, mainly expressed in germinating seeds, seedlings, roots, flowers and leaves.

It localises to the cytoplasm. Its subcellular location is the nucleus. It catalyses the reaction Fe(III)-heme b-[protein] + nitric oxide + H2O = Fe(II)-heme b-[protein] + nitrite + 2 H(+). In terms of biological role, phytoglobin that reduces nitrite to nitric oxide under anoxic conditions (e.g. during flooding or in waterlogged soil). May not function as an oxygen storage or transport protein. Has an unusually high affinity for O(2) through an hexacoordinate heme iron because of a very low dissociation constant. Promotes tolerance to low potassium K(+) conditions. This is Anaerobic nitrite reductase NSHB2 from Oryza sativa subsp. indica (Rice).